Consider the following 245-residue polypeptide: Biosynthetic peptidoglycan transglycosylase (245 aa).

Residues 20 to 42 (VYAGSVFAGAWLATQLFYLVQIA) traverse the membrane as a helical segment.

Belongs to the glycosyltransferase 51 family.

The protein localises to the cell inner membrane. The enzyme catalyses [GlcNAc-(1-&gt;4)-Mur2Ac(oyl-L-Ala-gamma-D-Glu-L-Lys-D-Ala-D-Ala)](n)-di-trans,octa-cis-undecaprenyl diphosphate + beta-D-GlcNAc-(1-&gt;4)-Mur2Ac(oyl-L-Ala-gamma-D-Glu-L-Lys-D-Ala-D-Ala)-di-trans,octa-cis-undecaprenyl diphosphate = [GlcNAc-(1-&gt;4)-Mur2Ac(oyl-L-Ala-gamma-D-Glu-L-Lys-D-Ala-D-Ala)](n+1)-di-trans,octa-cis-undecaprenyl diphosphate + di-trans,octa-cis-undecaprenyl diphosphate + H(+). It participates in cell wall biogenesis; peptidoglycan biosynthesis. In terms of biological role, peptidoglycan polymerase that catalyzes glycan chain elongation from lipid-linked precursors. The protein is Biosynthetic peptidoglycan transglycosylase of Burkholderia ambifaria (strain MC40-6).